We begin with the raw amino-acid sequence, 24 residues long: Pyruvate kinase (24 aa).

Belongs to the pyruvate kinase family. In terms of assembly, homotetramer. The cofactor is Mg(2+). K(+) is required as a cofactor.

The catalysed reaction is pyruvate + ATP = phosphoenolpyruvate + ADP + H(+). It participates in carbohydrate degradation; glycolysis; pyruvate from D-glyceraldehyde 3-phosphate: step 5/5. This chain is Pyruvate kinase (pyk), found in Clostridium pasteurianum.